Consider the following 340-residue polypeptide: Alcohol dehydrogenase (340 aa).

Residues C37, H58, C89, C92, C95, C103, and C145 each coordinate Zn(2+).

This sequence belongs to the zinc-containing alcohol dehydrogenase family. Zn(2+) serves as cofactor.

The catalysed reaction is a primary alcohol + NAD(+) = an aldehyde + NADH + H(+). It catalyses the reaction a secondary alcohol + NAD(+) = a ketone + NADH + H(+). The protein is Alcohol dehydrogenase (adh) of Staphylococcus epidermidis (strain ATCC 12228 / FDA PCI 1200).